Consider the following 116-residue polypeptide: HTH-type transcriptional regulator SarV (116 aa).

Positions 51-74 (RDTLHFEMLWDTSKIDVIIRKIYK) form a DNA-binding region, H-T-H motif.

The protein belongs to the SarA family.

It localises to the cytoplasm. Functionally, part of the pathway by which MgrA and SarA control autolysis. The sequence is that of HTH-type transcriptional regulator SarV (sarV) from Staphylococcus aureus (strain Mu50 / ATCC 700699).